The following is a 249-amino-acid chain: Leucyl/phenylalanyl-tRNA--protein transferase (249 aa).

This sequence belongs to the L/F-transferase family.

It is found in the cytoplasm. The catalysed reaction is N-terminal L-lysyl-[protein] + L-leucyl-tRNA(Leu) = N-terminal L-leucyl-L-lysyl-[protein] + tRNA(Leu) + H(+). It carries out the reaction N-terminal L-arginyl-[protein] + L-leucyl-tRNA(Leu) = N-terminal L-leucyl-L-arginyl-[protein] + tRNA(Leu) + H(+). It catalyses the reaction L-phenylalanyl-tRNA(Phe) + an N-terminal L-alpha-aminoacyl-[protein] = an N-terminal L-phenylalanyl-L-alpha-aminoacyl-[protein] + tRNA(Phe). Functions in the N-end rule pathway of protein degradation where it conjugates Leu, Phe and, less efficiently, Met from aminoacyl-tRNAs to the N-termini of proteins containing an N-terminal arginine or lysine. This chain is Leucyl/phenylalanyl-tRNA--protein transferase, found in Xanthomonas axonopodis pv. citri (strain 306).